We begin with the raw amino-acid sequence, 222 residues long: MIF4G domain-containing protein B (222 aa).

Positions 3–205 (NSSKEDYKIQ…LEILEFRAGG (203 aa)) constitute an MIF4G domain.

The protein belongs to the MIF4GD family. Interacts with eif4g1, eif4g2 and slbp; probably tethered by SLBP to the 3'-end of mRNAs ending with the histone stem-loop, it also interacts with eif4g1 which is bound to their 5'-end.

It localises to the cytoplasm. The protein localises to the nucleus. Its function is as follows. Functions in replication-dependent translation of histone mRNAs which differ from other eukaryotic mRNAs in that they do not end with a poly-A tail but a stem-loop. May participate in circularizing those mRNAs specifically enhancing their translation. The sequence is that of MIF4G domain-containing protein B (mif4gdb) from Danio rerio (Zebrafish).